Here is a 336-residue protein sequence, read N- to C-terminus: 25S rRNA (uridine(2634)-N(3))-methyltransferase (336 aa).

The tract at residues Pro286–Asp307 is disordered. Basic and acidic residues predominate over residues Thr293–Asp307.

The protein belongs to the class I-like SAM-binding methyltransferase superfamily. BMT5 family.

Its subcellular location is the nucleus. It is found in the nucleolus. It carries out the reaction uridine(2634) in 25S rRNA + S-adenosyl-L-methionine = N(3)-methyluridine(2634) in 25S rRNA + S-adenosyl-L-homocysteine + H(+). Functionally, S-adenosyl-L-methionine-dependent methyltransferase that specifically methylates the N(3) position of uridine 2634 (m3U2634) in 25S rRNA. The chain is 25S rRNA (uridine(2634)-N(3))-methyltransferase (BMT5) from Saccharomyces cerevisiae (strain ATCC 204508 / S288c) (Baker's yeast).